The chain runs to 396 residues: Acetate kinase (396 aa).

Residue N8 coordinates Mg(2+). Residue K15 participates in ATP binding. R89 lines the substrate pocket. D146 functions as the Proton donor/acceptor in the catalytic mechanism. Residues 206–210, 283–285, and 331–335 contribute to the ATP site; these read HIGNG, DMR, and GVGEN. E383 lines the Mg(2+) pocket.

The protein belongs to the acetokinase family. Homodimer. Mg(2+) serves as cofactor. The cofactor is Mn(2+).

It localises to the cytoplasm. It catalyses the reaction acetate + ATP = acetyl phosphate + ADP. The protein operates within metabolic intermediate biosynthesis; acetyl-CoA biosynthesis; acetyl-CoA from acetate: step 1/2. In terms of biological role, catalyzes the formation of acetyl phosphate from acetate and ATP. Can also catalyze the reverse reaction. In Streptococcus pneumoniae (strain ATCC 700669 / Spain 23F-1), this protein is Acetate kinase.